The following is a 270-amino-acid chain: Pyrroline-5-carboxylate reductase (270 aa).

This sequence belongs to the pyrroline-5-carboxylate reductase family.

The protein resides in the cytoplasm. The enzyme catalyses L-proline + NADP(+) = (S)-1-pyrroline-5-carboxylate + NADPH + 2 H(+). It carries out the reaction L-proline + NAD(+) = (S)-1-pyrroline-5-carboxylate + NADH + 2 H(+). It participates in amino-acid biosynthesis; L-proline biosynthesis; L-proline from L-glutamate 5-semialdehyde: step 1/1. Its function is as follows. Catalyzes the reduction of 1-pyrroline-5-carboxylate (PCA) to L-proline. The sequence is that of Pyrroline-5-carboxylate reductase from Corynebacterium melassecola.